Reading from the N-terminus, the 367-residue chain is Innexin inx4 (367 aa).

Residues 1–21 (MYAAVKPLSKYLQFKSVHIYD) lie on the Cytoplasmic side of the membrane. A helical transmembrane segment spans residues 22–42 (AIFTLHSKVTVALLLACTFLL). The Extracellular segment spans residues 43 to 110 (SSKQYFGDPI…PENRNYITYY (68 aa)). The helical transmembrane segment at 111–131 (QWVVLVLLLESFVFYMPAFLW) threads the bilayer. The Cytoplasmic segment spans residues 132–186 (KIWEGGRLKHLCDDFHKMAVCKDKSRTHLRVLVNYFSSDYKETHFRYFVSYVFCE). A helical membrane pass occupies residues 187–207 (ILNLSISILNFLLLDVFFGGF). Over 208-268 (WGRYRNALLS…LLPLNILNEK (61 aa)) the chain is Extracellular. The helical transmembrane segment at 269–289 (IFAFLWIWFILVAMLISLKFL) threads the bilayer. Residues 290-367 (YRLATVLYPG…IKIPPGADKI (78 aa)) are Cytoplasmic-facing.

Belongs to the pannexin family. Expressed in nurse cells and oocyte during oogenesis. Uniform expression in imaginal wing disk and low expression in developing imaginal CNS. Expressed in embryonic pole cells and primordial germ cells.

It localises to the cell membrane. It is found in the cell junction. Its subcellular location is the gap junction. Functionally, structural component of the gap junctions in germline cells. Required for differentiation and survival of germline cysts in females and of spermatogonia in males; gap junctional communication between spermatogonia and somatic cyst cells may be required for normal differentiation and survival of spermatogonia. This is Innexin inx4 (zpg) from Drosophila melanogaster (Fruit fly).